The following is a 259-amino-acid chain: uncharacterized protein (259 aa).

An ABC transporter domain is found at 4-243; it reads INLKNINLTR…KILTDFYQEK (240 aa). 36–43 contributes to the ATP binding site; it reads GLNGSGKS.

It belongs to the ABC transporter superfamily.

This is an uncharacterized protein from Lactococcus lactis subsp. lactis (strain IL1403) (Streptococcus lactis).